The following is an 87-amino-acid chain: Small ribosomal subunit protein bS20 (87 aa).

The protein belongs to the bacterial ribosomal protein bS20 family.

Binds directly to 16S ribosomal RNA. In Finegoldia magna (strain ATCC 29328 / DSM 20472 / WAL 2508) (Peptostreptococcus magnus), this protein is Small ribosomal subunit protein bS20.